The following is a 498-amino-acid chain: U4/U6 small nuclear ribonucleoprotein Prp31 (498 aa).

Positions 1–24 are disordered; it reads MSLADELLADLEEAAEEEEENLID. The span at 7–24 shows a compositional bias: acidic residues; it reads LLADLEEAAEEEEENLID. Coiled-coil stretches lie at residues 84–119 and 180–214; these read EAAP…KYSK and DEEL…MSFI. The 119-residue stretch at 214–332 folds into the Nop domain; the sequence is IAPNLSIIVG…IERKFDKWQE (119 aa). The segment at 333-356 is disordered; sequence PPPVKQVKPLPAPLDGQRKKRGGR. Residues 350–363 carry the Nuclear localization signal (NLS) motif; that stretch reads RKKRGGRRYRKMKE.

The protein belongs to the PRP31 family. Identified in the spliceosome B complex. Component of the U4/U6-U5 tri-snRNP complex. Component of some MLL1/MLL complex.

It localises to the nucleus. It is found in the nucleus speckle. The protein resides in the cajal body. Functionally, involved in pre-mRNA splicing as component of the spliceosome. Required for the assembly of the U4/U5/U6 tri-snRNP complex, one of the building blocks of the spliceosome. The sequence is that of U4/U6 small nuclear ribonucleoprotein Prp31 (prpf31) from Xenopus laevis (African clawed frog).